The primary structure comprises 356 residues: Putative zinc finger protein At1g68190 (356 aa).

Zn(2+)-binding residues include C14, C17, C37, H42, C57, C60, C80, and H85. The B box-type 1; atypical zinc-finger motif lies at C14–L56. Residues C57–L97 form a B box-type 2; atypical zinc finger. The interval E159 to K178 is disordered.

Belongs to the CONSTANS family.

It localises to the nucleus. The protein is Putative zinc finger protein At1g68190 of Arabidopsis thaliana (Mouse-ear cress).